The following is a 198-amino-acid chain: 3-isopropylmalate dehydratase small subunit (198 aa).

This sequence belongs to the LeuD family. LeuD type 1 subfamily. In terms of assembly, heterodimer of LeuC and LeuD.

The enzyme catalyses (2R,3S)-3-isopropylmalate = (2S)-2-isopropylmalate. Its pathway is amino-acid biosynthesis; L-leucine biosynthesis; L-leucine from 3-methyl-2-oxobutanoate: step 2/4. Catalyzes the isomerization between 2-isopropylmalate and 3-isopropylmalate, via the formation of 2-isopropylmaleate. In Mycobacterium marinum (strain ATCC BAA-535 / M), this protein is 3-isopropylmalate dehydratase small subunit.